The following is a 501-amino-acid chain: G protein-activated inward rectifier potassium channel 1 (501 aa).

The interval 1-40 (MSALRRKFGDDYQVVTTSSSGSGLQPQGPGQGPQQQLVPK) is disordered. At 1–80 (MSALRRKFGD…LFTTLVDLKW (80 aa)) the chain is on the cytoplasmic side. A compositionally biased stretch (low complexity) spans 18 to 37 (SSSGSGLQPQGPGQGPQQQL). The chain crosses the membrane as a helical span at residues 81 to 105 (RWNLFIFILTYTVAWLFMASMWWVI). Residues 106–129 (AYTRGDLNKAHVGNYTPCVANVYN) are Extracellular-facing. N-linked (GlcNAc...) asparagine glycosylation is present at asparagine 119. Residues 130–141 (FPSAFLFFIETE) constitute an intramembrane region (helical; Pore-forming). An intramembrane region (pore-forming) is located at residues 142-148 (ATIGYGY). The Selectivity filter motif lies at 143-148 (TIGYGY). Residues 149–157 (RYITDKCPE) lie on the Extracellular side of the membrane. Residues 158-179 (GIILFLFQSILGSIVDAFLIGC) form a helical membrane-spanning segment. The Cytoplasmic portion of the chain corresponds to 180–501 (MFIKMSQPKK…LRKMNSDRFT (322 aa)). The tract at residues 182–209 (IKMSQPKKRAETLMFSEHAVISMRDGKL) is polyphosphoinositide (PIP2)-binding. A phosphoserine mark is found at serine 385 and serine 424.

Belongs to the inward rectifier-type potassium channel (TC 1.A.2.1) family. KCNJ3 subfamily. As to quaternary structure, associates with KCNJ5/GIRK4 or KCNJ6/GIRK2 or KCNJ9/GIRK3 to form a G-protein activated heteromultimer pore-forming unit. The resulting inward current is much larger.

It is found in the membrane. It catalyses the reaction K(+)(in) = K(+)(out). Its activity is regulated as follows. Heteromultimer composed of KCNJ3/GIRK1 and KCNJ5/GIRK4 is activated by phosphatidylinositol 4,5 biphosphate (PtdIns(4,5)P2). In terms of biological role, inward rectifier potassium channels are characterized by a greater tendency to allow potassium to flow into the cell rather than out of it. Their voltage dependence is regulated by the concentration of extracellular potassium; as external potassium is raised, the voltage range of the channel opening shifts to more positive voltages. The inward rectification is mainly due to the blockage of outward current by internal magnesium. This potassium channel is controlled by G proteins. This receptor plays a crucial role in regulating the heartbeat. The protein is G protein-activated inward rectifier potassium channel 1 (KCNJ3) of Bos taurus (Bovine).